A 208-amino-acid polypeptide reads, in one-letter code: Large ribosomal subunit protein uL3 (208 aa).

Residues 126 to 150 (NQSRGPMAHGSRYHRRPGSMGPVAP) are disordered.

Belongs to the universal ribosomal protein uL3 family. As to quaternary structure, part of the 50S ribosomal subunit. Forms a cluster with proteins L14 and L19.

Functionally, one of the primary rRNA binding proteins, it binds directly near the 3'-end of the 23S rRNA, where it nucleates assembly of the 50S subunit. The protein is Large ribosomal subunit protein uL3 of Exiguobacterium sibiricum (strain DSM 17290 / CCUG 55495 / CIP 109462 / JCM 13490 / 255-15).